The chain runs to 241 residues: Ribonuclease PH (241 aa).

Phosphate is bound by residues Arg-87 and 125–127 (GTR).

The protein belongs to the RNase PH family. Homohexameric ring arranged as a trimer of dimers.

It carries out the reaction tRNA(n+1) + phosphate = tRNA(n) + a ribonucleoside 5'-diphosphate. Phosphorolytic 3'-5' exoribonuclease that plays an important role in tRNA 3'-end maturation. Removes nucleotide residues following the 3'-CCA terminus of tRNAs; can also add nucleotides to the ends of RNA molecules by using nucleoside diphosphates as substrates, but this may not be physiologically important. Probably plays a role in initiation of 16S rRNA degradation (leading to ribosome degradation) during starvation. This chain is Ribonuclease PH, found in Salinispora tropica (strain ATCC BAA-916 / DSM 44818 / JCM 13857 / NBRC 105044 / CNB-440).